The sequence spans 318 residues: MIVTFLGTGSGAPTTRRNVSGIGLRFLQAGKWWLFDCGEGTQHQLLRAPMKISQLDKIFITHLHGDHLYGLIGLLASRSLRNTEPTPLELYGPPGLDRYFRGIMEASPVHLQYPLEIKIVSEGVIYEDEEIVVSCRMAKHRVPSFAYAVMEKEKTGAFQVERAKQAGVPSGPLFGALKRGEQVTLEDGRVLDGKDFVGEPQPGRKIVFSGDTEPSQAVLELAKGADLLVHEATYAHHDKELATRSGHSTAREAAQIAKEAGVKELCLTHFSPRYEDEDGDFSMEDLLAEAQQIFPATQLADDLGSISVKRERSDGRKP.

Zn(2+) contacts are provided by H62, H64, D66, H67, H140, D211, and H269. The active-site Proton acceptor is the D66.

It belongs to the RNase Z family. Homodimer. The cofactor is Zn(2+).

It catalyses the reaction Endonucleolytic cleavage of RNA, removing extra 3' nucleotides from tRNA precursor, generating 3' termini of tRNAs. A 3'-hydroxy group is left at the tRNA terminus and a 5'-phosphoryl group is left at the trailer molecule.. Its function is as follows. Zinc phosphodiesterase, which displays some tRNA 3'-processing endonuclease activity. Probably involved in tRNA maturation, by removing a 3'-trailer from precursor tRNA. This chain is Ribonuclease Z, found in Brevibacillus brevis (strain 47 / JCM 6285 / NBRC 100599).